A 234-amino-acid polypeptide reads, in one-letter code: Small ribosomal subunit protein uS5 (234 aa).

A compositionally biased stretch (polar residues) spans 1–10 (MEDIKTTTPE). Residues 1 to 69 (MEDIKTTTPE…KDGSGNKPNK (69 aa)) are disordered. Residues 11–31 (VKNEENKTSEVKEGKALEKNN) show a composition bias toward basic and acidic residues. One can recognise an S5 DRBM domain in the interval 78 to 141 (LEEKIVGVKK…KSAKNNMYKV (64 aa)).

The protein belongs to the universal ribosomal protein uS5 family. As to quaternary structure, part of the 30S ribosomal subunit. Contacts proteins S4 and S8.

In terms of biological role, with S4 and S12 plays an important role in translational accuracy. Its function is as follows. Located at the back of the 30S subunit body where it stabilizes the conformation of the head with respect to the body. This chain is Small ribosomal subunit protein uS5, found in Malacoplasma penetrans (strain HF-2) (Mycoplasma penetrans).